The chain runs to 354 residues: Holliday junction branch migration complex subunit RuvB (354 aa).

Positions 1–24 are disordered; sequence MSIQTDDFAPVPPPKRVVSAAPTS. Residues 5–195 form a large ATPase domain (RuvB-L) region; sequence TDDFAPVPPP…FGIVARLEFY (191 aa). Residues L34, R35, G76, K79, T80, T81, 142–144, R185, Y195, and R232 contribute to the ATP site; that span reads EDY. T80 provides a ligand contact to Mg(2+). Residues 196 to 266 are small ATPAse domain (RuvB-S); the sequence is TPEELSRIVT…IAQRALAMLD (71 aa). The interval 269–354 is head domain (RuvB-H); the sequence is PQGFDVMDRK…RQHTDLFGPA (86 aa). Residues R324 and R329 each contribute to the DNA site.

It belongs to the RuvB family. In terms of assembly, homohexamer. Forms an RuvA(8)-RuvB(12)-Holliday junction (HJ) complex. HJ DNA is sandwiched between 2 RuvA tetramers; dsDNA enters through RuvA and exits via RuvB. An RuvB hexamer assembles on each DNA strand where it exits the tetramer. Each RuvB hexamer is contacted by two RuvA subunits (via domain III) on 2 adjacent RuvB subunits; this complex drives branch migration. In the full resolvosome a probable DNA-RuvA(4)-RuvB(12)-RuvC(2) complex forms which resolves the HJ.

The protein resides in the cytoplasm. The catalysed reaction is ATP + H2O = ADP + phosphate + H(+). The RuvA-RuvB-RuvC complex processes Holliday junction (HJ) DNA during genetic recombination and DNA repair, while the RuvA-RuvB complex plays an important role in the rescue of blocked DNA replication forks via replication fork reversal (RFR). RuvA specifically binds to HJ cruciform DNA, conferring on it an open structure. The RuvB hexamer acts as an ATP-dependent pump, pulling dsDNA into and through the RuvAB complex. RuvB forms 2 homohexamers on either side of HJ DNA bound by 1 or 2 RuvA tetramers; 4 subunits per hexamer contact DNA at a time. Coordinated motions by a converter formed by DNA-disengaged RuvB subunits stimulates ATP hydrolysis and nucleotide exchange. Immobilization of the converter enables RuvB to convert the ATP-contained energy into a lever motion, pulling 2 nucleotides of DNA out of the RuvA tetramer per ATP hydrolyzed, thus driving DNA branch migration. The RuvB motors rotate together with the DNA substrate, which together with the progressing nucleotide cycle form the mechanistic basis for DNA recombination by continuous HJ branch migration. Branch migration allows RuvC to scan DNA until it finds its consensus sequence, where it cleaves and resolves cruciform DNA. In Paracidovorax citrulli (strain AAC00-1) (Acidovorax citrulli), this protein is Holliday junction branch migration complex subunit RuvB.